A 116-amino-acid polypeptide reads, in one-letter code: MTEQAEDALPIRFTDAAASKVKTLLEEEENDALKLRVYVTGGGCSGFQYGFTFDEKINEGDYTVEKQGVQLVVDPMSLQYLVGGEVDYTSGLEGSRFFVKNPNATTTCGCGASFSV.

3 residues coordinate iron-sulfur cluster: C44, C108, and C110.

It belongs to the HesB/IscA family. Homodimer. Requires iron-sulfur cluster as cofactor.

In terms of biological role, required for insertion of 4Fe-4S clusters for at least IspG. The sequence is that of Iron-sulfur cluster insertion protein ErpA from Shewanella halifaxensis (strain HAW-EB4).